Here is a 420-residue protein sequence, read N- to C-terminus: F420-non-reducing hydrogenase vhu subunit A (420 aa).

Residues C61 and C64 each contribute to the Ni(2+) site.

This sequence belongs to the [NiFe]/[NiFeSe] hydrogenase large subunit family. In terms of assembly, the F420-non-reducing hydrogenase vhu is composed of four subunits; VhuA, VhuD, VhuG and VhuU. Requires Ni(2+) as cofactor.

This is F420-non-reducing hydrogenase vhu subunit A (vhuA) from Methanococcus voltae.